The primary structure comprises 447 residues: Imidazolonepropionase (447 aa).

2 residues coordinate Fe(3+): His85 and His87. Zn(2+) is bound by residues His85 and His87. 4-imidazolone-5-propanoate is bound by residues Arg94, Tyr157, and His190. Tyr157 is an N-formimidoyl-L-glutamate binding site. His255 lines the Fe(3+) pocket. His255 contacts Zn(2+). Residue Glu258 participates in 4-imidazolone-5-propanoate binding. Asp329 serves as a coordination point for Fe(3+). Asp329 is a binding site for Zn(2+). N-formimidoyl-L-glutamate is bound by residues Asn331 and Gly333. Residue Ser334 coordinates 4-imidazolone-5-propanoate.

The protein belongs to the metallo-dependent hydrolases superfamily. HutI family. The cofactor is Zn(2+). Fe(3+) serves as cofactor.

Its subcellular location is the cytoplasm. The catalysed reaction is 4-imidazolone-5-propanoate + H2O = N-formimidoyl-L-glutamate. The protein operates within amino-acid degradation; L-histidine degradation into L-glutamate; N-formimidoyl-L-glutamate from L-histidine: step 3/3. Catalyzes the hydrolytic cleavage of the carbon-nitrogen bond in imidazolone-5-propanoate to yield N-formimidoyl-L-glutamate. It is the third step in the universal histidine degradation pathway. The protein is Imidazolonepropionase of Shouchella clausii (strain KSM-K16) (Alkalihalobacillus clausii).